The chain runs to 122 residues: UPF0344 protein BPUM_1008 (122 aa).

4 consecutive transmembrane segments (helical) span residues 5 to 25, 33 to 53, 60 to 80, and 93 to 113; these read LHITAWVLGIILFFVAFALAG, IVHMIVRLLYLIIIATGVELY, IPGFGGEYIGKMILGILVIGF, and SVTGVLIGFIIFAIVTILLGL.

The protein belongs to the UPF0344 family.

The protein localises to the cell membrane. This Bacillus pumilus (strain SAFR-032) protein is UPF0344 protein BPUM_1008.